The chain runs to 286 residues: Putative electron transfer flavoprotein subunit YgcQ (286 aa).

An FAD-binding site is contributed by 225–253 (VCIVVGASGAAALMAGVRNSKFVVAINHD).

Belongs to the ETF alpha-subunit/FixB family. YgcQ and YgcR form a heterodimer.

Functionally, may play a role in a redox process. This is Putative electron transfer flavoprotein subunit YgcQ (ygcQ) from Escherichia coli (strain K12).